Reading from the N-terminus, the 264-residue chain is 3-methyl-2-oxobutanoate hydroxymethyltransferase (264 aa).

Mg(2+) contacts are provided by D45 and D84. 3-methyl-2-oxobutanoate-binding positions include 45–46 (DS), D84, and K112. A Mg(2+)-binding site is contributed by E114. Residue E181 is the Proton acceptor of the active site.

Belongs to the PanB family. As to quaternary structure, homodecamer; pentamer of dimers. Mg(2+) serves as cofactor.

The protein resides in the cytoplasm. It catalyses the reaction 3-methyl-2-oxobutanoate + (6R)-5,10-methylene-5,6,7,8-tetrahydrofolate + H2O = 2-dehydropantoate + (6S)-5,6,7,8-tetrahydrofolate. The protein operates within cofactor biosynthesis; (R)-pantothenate biosynthesis; (R)-pantoate from 3-methyl-2-oxobutanoate: step 1/2. In terms of biological role, catalyzes the reversible reaction in which hydroxymethyl group from 5,10-methylenetetrahydrofolate is transferred onto alpha-ketoisovalerate to form ketopantoate. The protein is 3-methyl-2-oxobutanoate hydroxymethyltransferase of Vibrio atlanticus (strain LGP32) (Vibrio splendidus (strain Mel32)).